The following is a 556-amino-acid chain: Oxygen-dependent choline dehydrogenase (556 aa).

Residue 6–35 (DYIIIGAGSAGNVLAARLTEDPGVSVLLLE) coordinates FAD. H475 serves as the catalytic Proton acceptor.

Belongs to the GMC oxidoreductase family. Requires FAD as cofactor.

It carries out the reaction choline + A = betaine aldehyde + AH2. It catalyses the reaction betaine aldehyde + NAD(+) + H2O = glycine betaine + NADH + 2 H(+). It participates in amine and polyamine biosynthesis; betaine biosynthesis via choline pathway; betaine aldehyde from choline (cytochrome c reductase route): step 1/1. Involved in the biosynthesis of the osmoprotectant glycine betaine. Catalyzes the oxidation of choline to betaine aldehyde and betaine aldehyde to glycine betaine at the same rate. This Xanthomonas campestris pv. campestris (strain 8004) protein is Oxygen-dependent choline dehydrogenase.